A 2374-amino-acid polypeptide reads, in one-letter code: CCR4-NOT transcription complex subunit 1 (2374 aa).

4 short sequence motifs (LXXLL) span residues leucine 153–leucine 157, leucine 181–leucine 185, leucine 223–leucine 227, and leucine 570–leucine 574. Over residues leucine 1009–alanine 1051 the composition is skewed to low complexity. Positions leucine 1009 to proline 1060 are disordered. The interaction with CCR4-NOT complex catalytic subunits stretch occupies residues glutamate 1082 to threonine 1604. 3 short sequence motifs (LXXLL) span residues isoleucine 1638–leucine 1642, leucine 1940–leucine 1944, and leucine 2094–leucine 2098.

Belongs to the CNOT1 family. Component of the CCR4-NOT complex.

The protein localises to the cytoplasm. It localises to the nucleus. Its function is as follows. Scaffolding component of the CCR4-NOT complex which is one of the major cellular mRNA deadenylases and is linked to various cellular processes including bulk mRNA degradation, miRNA-mediated repression, translational repression during translational initiation and general transcription regulation. Additional complex functions may be a consequence of its influence on mRNA expression. Its scaffolding function implies its interaction with the catalytic complex module and diverse RNA-binding proteins mediating the complex recruitment to selected mRNA 3'UTRs. Acts as a transcriptional repressor. Represses the ligand-dependent transcriptional activation by nuclear receptors. This chain is CCR4-NOT transcription complex subunit 1 (cnot1), found in Danio rerio (Zebrafish).